We begin with the raw amino-acid sequence, 103 residues long: Sec-independent protein translocase protein TatA (103 aa).

Residues 1-21 form a helical membrane-spanning segment; that stretch reads MGNIFSPTHLIVILLIVLVLF. The interval 60 to 103 is disordered; it reads YSKTTDVRPQQSQPLSVKRAAERRKGSSSFKEGKASVAKKQRGK.

Belongs to the TatA/E family. In terms of assembly, the Tat system comprises two distinct complexes: a TatABC complex, containing multiple copies of TatA, TatB and TatC subunits, and a separate TatA complex, containing only TatA subunits. Substrates initially bind to the TatABC complex, which probably triggers association of the separate TatA complex to form the active translocon.

It localises to the cell inner membrane. Part of the twin-arginine translocation (Tat) system that transports large folded proteins containing a characteristic twin-arginine motif in their signal peptide across membranes. TatA could form the protein-conducting channel of the Tat system. In Bartonella quintana (strain Toulouse) (Rochalimaea quintana), this protein is Sec-independent protein translocase protein TatA.